The primary structure comprises 100 residues: Urease subunit gamma (100 aa).

Belongs to the urease gamma subunit family. Heterotrimer of UreA (gamma), UreB (beta) and UreC (alpha) subunits. Three heterotrimers associate to form the active enzyme.

It is found in the cytoplasm. It catalyses the reaction urea + 2 H2O + H(+) = hydrogencarbonate + 2 NH4(+). Its pathway is nitrogen metabolism; urea degradation; CO(2) and NH(3) from urea (urease route): step 1/1. In Leptothrix cholodnii (strain ATCC 51168 / LMG 8142 / SP-6) (Leptothrix discophora (strain SP-6)), this protein is Urease subunit gamma.